Reading from the N-terminus, the 345-residue chain is MKDLKDLVRPNVWNLKPYSSARDEFHGDASVFLDANENPWNMPYNRYPDPLQWKLKDRLAVLKGVDRSSIFLGNGSDEAIDLVIRAFCEPGLDSVVTISPSYGMYEVAANVNNVECRKVSLDENFDLDAEAVLESADEWTKVIFLCSPNNPSGNSLDRGSIYKILKNYEGIVVIDEAYIDFSAYPSFLKELSGFPNLIVLQTLSKAWGAAGIRLGMAFASPEIIGVLNKIKYPYNVNQLTQEKALELLNDEATMKHQVNEILTERNRLEKILSEPPFSYQVYPSDANFLLVNVAKADAMYNGLVKKGIVVRNRSNVQKCRGCLRITIGTPKENDSLLNAMKNMKL.

Lys-205 is subject to N6-(pyridoxal phosphate)lysine.

It belongs to the class-II pyridoxal-phosphate-dependent aminotransferase family. Histidinol-phosphate aminotransferase subfamily. Homodimer. Pyridoxal 5'-phosphate serves as cofactor.

It carries out the reaction L-histidinol phosphate + 2-oxoglutarate = 3-(imidazol-4-yl)-2-oxopropyl phosphate + L-glutamate. It functions in the pathway amino-acid biosynthesis; L-histidine biosynthesis; L-histidine from 5-phospho-alpha-D-ribose 1-diphosphate: step 7/9. The polypeptide is Histidinol-phosphate aminotransferase (Parabacteroides distasonis (strain ATCC 8503 / DSM 20701 / CIP 104284 / JCM 5825 / NCTC 11152)).